The chain runs to 300 residues: Ribonuclease HIII (300 aa).

Residues 83 to 300 (IPIIGSDEVG…THKAQALLTK (218 aa)) form the RNase H type-2 domain. 3 residues coordinate a divalent metal cation: Asp89, Glu90, and Asp194.

It belongs to the RNase HII family. RnhC subfamily. Requires Mn(2+) as cofactor. The cofactor is Mg(2+).

The protein localises to the cytoplasm. It catalyses the reaction Endonucleolytic cleavage to 5'-phosphomonoester.. Endonuclease that specifically degrades the RNA of RNA-DNA hybrids. The polypeptide is Ribonuclease HIII (Streptococcus pyogenes serotype M4 (strain MGAS10750)).